The sequence spans 203 residues: Ribosomal RNA large subunit methyltransferase E (203 aa).

Positions 59, 61, 79, 95, and 118 each coordinate S-adenosyl-L-methionine. Lys-158 functions as the Proton acceptor in the catalytic mechanism.

The protein belongs to the class I-like SAM-binding methyltransferase superfamily. RNA methyltransferase RlmE family.

It is found in the cytoplasm. The enzyme catalyses uridine(2552) in 23S rRNA + S-adenosyl-L-methionine = 2'-O-methyluridine(2552) in 23S rRNA + S-adenosyl-L-homocysteine + H(+). Functionally, specifically methylates the uridine in position 2552 of 23S rRNA at the 2'-O position of the ribose in the fully assembled 50S ribosomal subunit. This Wigglesworthia glossinidia brevipalpis protein is Ribosomal RNA large subunit methyltransferase E.